Consider the following 341-residue polypeptide: AB hydrolase superfamily protein C1039.03 (341 aa).

Belongs to the AB hydrolase superfamily.

Its subcellular location is the cytoplasm. It localises to the nucleus. The polypeptide is AB hydrolase superfamily protein C1039.03 (Schizosaccharomyces pombe (strain 972 / ATCC 24843) (Fission yeast)).